Consider the following 134-residue polypeptide: MSWQSYVDDHLMCDIEGHEGHRLTAAAIVGHDGSVWAQSATFPQFKPEEMNGIMTDFNAPGHLVPTGLHLGGTKYMVIQGEAGAVIRGKKGSGGITIKKTGQALVFGIYEEPVTPGQCNMVVERLGDYLLEQGL.

The cysteines at positions 13 and 118 are disulfide-linked. An Involved in PIP2 interaction motif is present at residues 84–100 (AVIRGKKGSGGITIKKT). Residue T114 is modified to Phosphothreonine.

It belongs to the profilin family. In terms of assembly, occurs in many kinds of cells as a complex with monomeric actin in a 1:1 ratio. Post-translationally, phosphorylated by MAP kinases.

The protein resides in the cytoplasm. It localises to the cytoskeleton. Binds to actin and affects the structure of the cytoskeleton. At high concentrations, profilin prevents the polymerization of actin, whereas it enhances it at low concentrations. The polypeptide is Profilin-4 (Olea europaea (Common olive)).